The chain runs to 112 residues: Small ribosomal subunit protein bS16 (112 aa).

The protein belongs to the bacterial ribosomal protein bS16 family.

The sequence is that of Small ribosomal subunit protein bS16 from Aquifex aeolicus (strain VF5).